Here is a 146-residue protein sequence, read N- to C-terminus: Catabolic 3-dehydroquinase (146 aa).

Residue tyrosine 24 is the Proton acceptor of the active site. Substrate is bound by residues asparagine 78, histidine 84, and aspartate 91. Histidine 104 functions as the Proton donor in the catalytic mechanism. Substrate-binding positions include 105 to 106 (IT) and arginine 115.

This sequence belongs to the type-II 3-dehydroquinase family. As to quaternary structure, homododecamer. Adopts a ring-like structure, composed of an arrangement of two hexameric rings stacked on top of one another.

The catalysed reaction is 3-dehydroquinate = 3-dehydroshikimate + H2O. It participates in aromatic compound metabolism; 3,4-dihydroxybenzoate biosynthesis; 3,4-dihydroxybenzoate from 3-dehydroquinate: step 1/2. Functionally, is involved in the catabolism of quinate. Allows the utilization of quinate as carbon source via the beta-ketoadipate pathway. This Scheffersomyces stipitis (strain ATCC 58785 / CBS 6054 / NBRC 10063 / NRRL Y-11545) (Yeast) protein is Catabolic 3-dehydroquinase.